The primary structure comprises 1015 residues: Putative ankyrin repeat protein R96 (1015 aa).

Basic residues predominate over residues 1 to 14 (MSTVKKSSKKKSSK). A disordered region spans residues 1-37 (MSTVKKSSKKKSSKKSSSGNESSKKSSPKIVPKHTAK). 8 ANK repeats span residues 136 to 165 (NGHK…NIDF), 168 to 201 (APSN…AVNI), 202 to 231 (DGRS…DVEV), 340 to 370 (LGHN…DFQA), 374 to 403 (NITN…KIVS), 456 to 485 (SGYR…TIFA), 498 to 527 (NNND…QFQL), and 535 to 564 (TVPT…ITDC).

In Acanthamoeba polyphaga mimivirus (APMV), this protein is Putative ankyrin repeat protein R96.